We begin with the raw amino-acid sequence, 241 residues long: Small ribosomal subunit protein eS4 (241 aa).

The S4 RNA-binding domain maps to 37–100 (LPIVVWARDQ…GKHYRILRDK (64 aa)).

This sequence belongs to the eukaryotic ribosomal protein eS4 family.

The protein is Small ribosomal subunit protein eS4 of Methanospirillum hungatei JF-1 (strain ATCC 27890 / DSM 864 / NBRC 100397 / JF-1).